The chain runs to 431 residues: Enolase (431 aa).

Gln-167 lines the (2R)-2-phosphoglycerate pocket. Glu-209 acts as the Proton donor in catalysis. Residues Asp-246, Glu-290, and Asp-316 each coordinate Mg(2+). (2R)-2-phosphoglycerate-binding residues include Lys-341, Arg-370, Ser-371, and Lys-392. Lys-341 (proton acceptor) is an active-site residue.

This sequence belongs to the enolase family. In terms of assembly, component of the RNA degradosome, a multiprotein complex involved in RNA processing and mRNA degradation. Mg(2+) serves as cofactor.

Its subcellular location is the cytoplasm. It localises to the secreted. The protein localises to the cell surface. The catalysed reaction is (2R)-2-phosphoglycerate = phosphoenolpyruvate + H2O. It functions in the pathway carbohydrate degradation; glycolysis; pyruvate from D-glyceraldehyde 3-phosphate: step 4/5. Catalyzes the reversible conversion of 2-phosphoglycerate (2-PG) into phosphoenolpyruvate (PEP). It is essential for the degradation of carbohydrates via glycolysis. This is Enolase from Shigella flexneri serotype 5b (strain 8401).